Here is an 858-residue protein sequence, read N- to C-terminus: Elongation factor 2 (858 aa).

One can recognise a tr-type G domain in the interval 17-362 (ANIRNMSVIA…MITIHLPSPV (346 aa)). Residues 26–33 (AHVDHGKS), 158–161 (NKMD), and 216–218 (SGL) each bind GTP. The residue at position 715 (histidine 715) is a Diphthamide.

Belongs to the TRAFAC class translation factor GTPase superfamily. Classic translation factor GTPase family. EF-G/EF-2 subfamily. In terms of assembly, binds to 80S ribosomes. Actively translating ribosomes show mutually exclusive binding of eIF5a (EIF5A or EIF5A2) and EEF2/eEF2. Interacts with serbp1; interaction sequesters eef2/eEF2 at the A-site of the ribosome, thereby blocking the interaction sites of the mRNA-tRNA complex, promoting ribosome stabilization and hibernation. Interacts with habp4; interaction takes place at the A-site of hibernating ribosomes and promotes ribosome stabilization.

The protein resides in the cytoplasm. It localises to the nucleus. It carries out the reaction GTP + H2O = GDP + phosphate + H(+). Catalyzes the GTP-dependent ribosomal translocation step during translation elongation. During this step, the ribosome changes from the pre-translocational (PRE) to the post-translocational (POST) state as the newly formed A-site-bound peptidyl-tRNA and P-site-bound deacylated tRNA move to the P and E sites, respectively. Catalyzes the coordinated movement of the two tRNA molecules, the mRNA and conformational changes in the ribosome. In Xenopus laevis (African clawed frog), this protein is Elongation factor 2.